A 306-amino-acid chain; its full sequence is 4-hydroxy-tetrahydrodipicolinate synthase (306 aa).

Position 49 (Thr-49) interacts with pyruvate. Catalysis depends on Tyr-136, which acts as the Proton donor/acceptor. The active-site Schiff-base intermediate with substrate is Lys-164. A pyruvate-binding site is contributed by Ile-207.

The protein belongs to the DapA family. As to quaternary structure, homotetramer; dimer of dimers.

The protein resides in the cytoplasm. It carries out the reaction L-aspartate 4-semialdehyde + pyruvate = (2S,4S)-4-hydroxy-2,3,4,5-tetrahydrodipicolinate + H2O + H(+). Its pathway is amino-acid biosynthesis; L-lysine biosynthesis via DAP pathway; (S)-tetrahydrodipicolinate from L-aspartate: step 3/4. Catalyzes the condensation of (S)-aspartate-beta-semialdehyde [(S)-ASA] and pyruvate to 4-hydroxy-tetrahydrodipicolinate (HTPA). In Haloarcula marismortui (strain ATCC 43049 / DSM 3752 / JCM 8966 / VKM B-1809) (Halobacterium marismortui), this protein is 4-hydroxy-tetrahydrodipicolinate synthase.